The sequence spans 846 residues: MLFTVSCSKMSSIVDRDDSSIFDGLVEEDDKDKAKRVSRNKSEKKRRDQFNVLIKELGSMLPGNARKMDKSTVLQKSIDFLRKHKEITAQSDASEIRQDWKPTFLSNEEFTQLMLEALDGFFLAIMTDGSIIYVSESVTSLLEHLPSDLVDQSIFNFIPEGEHSEVYKILSTHLLESDSLTPEYLKSKNQLEFCCHMLRGTIDPKEPSTYEYVKFIGNFKSLNSVSSSAHNGFEGTIQRTHRPSYEDRVCFVATVRLATPQFIKEMCTVEEPNEEFASRHSLEWKFLFLDHRAPPIIGYLPFEVLGTSGYDYYHVDDLENLAKCHEHLMQYGKGKSCYYRFLTKGQQWIWLQTHYYITYHQWNSRPEFIVCTHTVVSYAEVRAERRRELSIEESLPEIAADKSQDSGSDNRINTVSLKEALERFDHSPTPSASSRSSRKSSHTAVSDPSSTPTKIPTDTSTPPRQHLPAHEKMVQRRSSFSSQSINSQSVGSSLTQPVMSQATNLPIPQGMSQFQFSAQLGAMQHLKDQLEQRTRMIEANIHRQQEELRKIQEQLQMVHGQGLQMFLQQPNPGLNFGSVQLSSGNSSNIQQLAPINMQGQVVPTNQIQSGMNTGHIGTTQHMIQQQTLQSTSTQSQQNVLSGHSQQTSLPSQTQSTLTAPLYNTMVISQPAAGSMVQIPSSMPQNSTQSAAVTTFTQDRQIRFSQGQQLVTKLVTAPVACGAVMVPSTMLMGQVVTAYPTFATQQQQSQTLSVTQQRQQQSSQEQQLTSVQQPSQAQLTQPPQQFLQTSRLLHGNPSTQLILSAAFPLQQSTFPQSHHQQHQSQQQQQLSRHRTDSLPDPSKVQPQ.

A Nuclear localization signal motif is present at residues 32-47 (DKAKRVSRNKSEKKRR). Residues 34 to 84 (AKRVSRNKSEKKRRDQFNVLIKELGSMLPGNARKMDKSTVLQKSIDFLRKH) form the bHLH domain. Phosphoserine is present on residues Ser-38 and Ser-42. Residue Lys-67 forms a Glycyl lysine isopeptide (Lys-Gly) (interchain with G-Cter in SUMO); alternate linkage. A Glycyl lysine isopeptide (Lys-Gly) (interchain with G-Cter in SUMO1); alternate cross-link involves residue Lys-67. PAS domains follow at residues 107–177 (NEEF…LLES) and 262–332 (FIKE…MQYG). Positions 336-379 (SCYYRFLTKGQQWIWLQTHYYITYHQWNSRPEFIVCTHTVVSYA) constitute a PAC domain. The interval 371-845 (CTHTVVSYAE…SLPDPSKVQP (475 aa)) is interaction with NR3C1. A Phosphoserine modification is found at Ser-408. A disordered region spans residues 420–495 (ALERFDHSPT…NSQSVGSSLT (76 aa)). Ser-427 is subject to Phosphoserine; by GSK3-beta. Ser-431 carries the phosphoserine modification. Over residues 447 to 463 (DPSSTPTKIPTDTSTPP) the composition is skewed to polar residues. The segment at 450-570 (STPTKIPTDT…QGLQMFLQQP (121 aa)) is interaction with SIRT1. Phosphothreonine; by CDK5 occurs at positions 451 and 461. Positions 478–493 (SSFSSQSINSQSVGSS) are enriched in low complexity. The implicated in the circadian rhythmicity stretch occupies residues 514–564 (FQFSAQLGAMQHLKDQLEQRTRMIEANIHRQQEELRKIQEQLQMVHGQGLQ). Composition is skewed to low complexity over residues 624–637 (QQQT…QSQQ) and 644–654 (SQQTSLPSQTQ). Disordered regions lie at residues 624-654 (QQQT…SQTQ), 764-783 (EQQL…QPPQ), and 811-846 (STFP…VQPQ). The segment covering 811 to 829 (STFPQSHHQQHQSQQQQQL) has biased composition (low complexity). Lys-842 participates in a covalent cross-link: Glycyl lysine isopeptide (Lys-Gly) (interchain with G-Cter in SUMO1).

In terms of assembly, component of the circadian clock oscillator which includes the CRY proteins, CLOCK or NPAS2, BMAL1 or BMAL2, CSNK1D and/or CSNK1E, TIMELESS and the PER proteins. Forms a heterodimer with BMAL1. The CLOCK-BMAL1 heterodimer is required for E-box-dependent transactivation, for CLOCK nuclear translocation and degradation, and for phosphorylation of both CLOCK and BMAL1. Interacts with NR3C1 in a ligand-dependent fashion. Interacts with ESR1 and estrogen stimulates this interaction. Interacts with the complex p35/CDK5. Interacts with RELA/p65. Interacts with KAT2B, CREBBP and EP300. Interacts with ID1 and ID3. Interacts with ID2. Interacts with MTA1. Interacts with OGA. Interacts with SIRT1. Interacts with CIPC. Interacts with EZH2. Interacts with EIF4E, PIWIL1 and DDX4. Interacts with PER1, PER2, CRY1 and CRY2 and this interaction requires a translocation to the nucleus. Interaction of the CLOCK-BMAL1 heterodimer with PER or CRY inhibits transcription activation. Interaction of the CLOCK-BMAL1 with CRY1 is independent of DNA but with PER2 is off DNA. The CLOCK-BMAL1 heterodimer interacts with GSK3B. Interacts with KDM5A. Interacts with KMT2A; in a circadian manner. Interacts with MYBBP1A. Interacts with THRAP3. Interacts with MED1; this interaction requires the presence of THRAP3. Interacts with NCOA2. The CLOCK-BMAL1 heterodimer interacts with PASD1. Interacts with ASS1 and IMPDH2; in a circadian manner. Interacts with NDUFA9. Interacts with PIWIL2 (via PIWI domain). Interacts with HNF4A. Ubiquitinated, leading to its proteasomal degradation. Post-translationally, O-glycosylated; contains O-GlcNAc. O-glycosylation by OGT prevents protein degradation by inhibiting ubiquitination. It also stabilizes the CLOCK-BMAL1 heterodimer thereby increasing CLOCK-BMAL1-mediated transcriptional activation of PER1/2/3 and CRY1/2. In terms of processing, phosphorylation is dependent on the CLOCK-BMAL1 heterodimer formation. Phosphorylation enhances the transcriptional activity, alters the subcellular localization and decreases the stability of the heterodimer by promoting its degradation. Phosphorylation shows circadian variations in the liver. May be phosphorylated by CSNK1D and CKSN1E. Sumoylation enhances its transcriptional activity and interaction with ESR1, resulting in up-regulation of ESR1 activity. Estrogen stimulates sumoylation. Desumoylation by SENP1 negatively regulates its transcriptional activity. Post-translationally, undergoes lysosome-mediated degradation in a time-dependent manner in the liver.

The protein localises to the cytoplasm. The protein resides in the nucleus. Its subcellular location is the cytosol. The catalysed reaction is L-lysyl-[protein] + acetyl-CoA = N(6)-acetyl-L-lysyl-[protein] + CoA + H(+). Its function is as follows. Transcriptional activator which forms a core component of the circadian clock. The circadian clock, an internal time-keeping system, regulates various physiological processes through the generation of approximately 24 hour circadian rhythms in gene expression, which are translated into rhythms in metabolism and behavior. It is derived from the Latin roots 'circa' (about) and 'diem' (day) and acts as an important regulator of a wide array of physiological functions including metabolism, sleep, body temperature, blood pressure, endocrine, immune, cardiovascular, and renal function. Consists of two major components: the central clock, residing in the suprachiasmatic nucleus (SCN) of the brain, and the peripheral clocks that are present in nearly every tissue and organ system. Both the central and peripheral clocks can be reset by environmental cues, also known as Zeitgebers (German for 'timegivers'). The predominant Zeitgeber for the central clock is light, which is sensed by retina and signals directly to the SCN. The central clock entrains the peripheral clocks through neuronal and hormonal signals, body temperature and feeding-related cues, aligning all clocks with the external light/dark cycle. Circadian rhythms allow an organism to achieve temporal homeostasis with its environment at the molecular level by regulating gene expression to create a peak of protein expression once every 24 hours to control when a particular physiological process is most active with respect to the solar day. Transcription and translation of core clock components (CLOCK, NPAS2, BMAL1, BMAL2, PER1, PER2, PER3, CRY1 and CRY2) plays a critical role in rhythm generation, whereas delays imposed by post-translational modifications (PTMs) are important for determining the period (tau) of the rhythms (tau refers to the period of a rhythm and is the length, in time, of one complete cycle). A diurnal rhythm is synchronized with the day/night cycle, while the ultradian and infradian rhythms have a period shorter and longer than 24 hours, respectively. Disruptions in the circadian rhythms contribute to the pathology of cardiovascular diseases, cancer, metabolic syndromes and aging. A transcription/translation feedback loop (TTFL) forms the core of the molecular circadian clock mechanism. Transcription factors, CLOCK or NPAS2 and BMAL1 or BMAL2, form the positive limb of the feedback loop, act in the form of a heterodimer and activate the transcription of core clock genes and clock-controlled genes (involved in key metabolic processes), harboring E-box elements (5'-CACGTG-3') within their promoters. The core clock genes: PER1/2/3 and CRY1/2 which are transcriptional repressors form the negative limb of the feedback loop and interact with the CLOCK|NPAS2-BMAL1|BMAL2 heterodimer inhibiting its activity and thereby negatively regulating their own expression. This heterodimer also activates nuclear receptors NR1D1/2 and RORA/B/G, which form a second feedback loop and which activate and repress BMAL1 transcription, respectively. Regulates the circadian expression of ICAM1, VCAM1, CCL2, THPO and MPL and also acts as an enhancer of the transactivation potential of NF-kappaB. Plays an important role in the homeostatic regulation of sleep. The CLOCK-BMAL1 heterodimer regulates the circadian expression of SERPINE1/PAI1, VWF, B3, CCRN4L/NOC, NAMPT, DBP, MYOD1, PPARGC1A, PPARGC1B, SIRT1, GYS2, F7, NGFR, GNRHR, BHLHE40/DEC1, ATF4, MTA1, KLF10 and also genes implicated in glucose and lipid metabolism. Promotes rhythmic chromatin opening, regulating the DNA accessibility of other transcription factors. The CLOCK-BMAL2 heterodimer activates the transcription of SERPINE1/PAI1 and BHLHE40/DEC1. The preferred binding motif for the CLOCK-BMAL1 heterodimer is 5'-CACGTGA-3', which contains a flanking adenine nucleotide at the 3-prime end of the canonical 6-nucleotide E-box sequence. CLOCK specifically binds to the half-site 5'-CAC-3', while BMAL1 binds to the half-site 5'-GTGA-3'. The CLOCK-BMAL1 heterodimer also recognizes the non-canonical E-box motifs 5'-AACGTGA-3' and 5'-CATGTGA-3'. CLOCK has an intrinsic acetyltransferase activity, which enables circadian chromatin remodeling by acetylating histones and nonhistone proteins, including its own partner BMAL1. Represses glucocorticoid receptor NR3C1/GR-induced transcriptional activity by reducing the association of NR3C1/GR to glucocorticoid response elements (GREs) via the acetylation of multiple lysine residues located in its hinge region. The acetyltransferase activity of CLOCK is as important as its transcription activity in circadian control. Acetylates metabolic enzymes IMPDH2 and NDUFA9 in a circadian manner. Facilitated by BMAL1, rhythmically interacts and acetylates argininosuccinate synthase 1 (ASS1) leading to enzymatic inhibition of ASS1 as well as the circadian oscillation of arginine biosynthesis and subsequent ureagenesis. Drives the circadian rhythm of blood pressure through transcriptional activation of ATP1B1. In Pongo abelii (Sumatran orangutan), this protein is Circadian locomoter output cycles protein kaput (CLOCK).